The sequence spans 572 residues: Urease subunit alpha (572 aa).

One can recognise a Urease domain in the interval 136–572 (GGIDTHIHWI…VPLAQRYFLF (437 aa)). Ni(2+)-binding residues include H141, H143, and K224. K224 carries the post-translational modification N6-carboxylysine. Residue H226 participates in substrate binding. Residues H253 and H279 each contribute to the Ni(2+) site. H327 functions as the Proton donor in the catalytic mechanism. Residue D367 coordinates Ni(2+).

It belongs to the metallo-dependent hydrolases superfamily. Urease alpha subunit family. As to quaternary structure, heterotrimer of UreA (gamma), UreB (beta) and UreC (alpha) subunits. Three heterotrimers associate to form the active enzyme. It depends on Ni cation as a cofactor. Post-translationally, carboxylation allows a single lysine to coordinate two nickel ions.

It is found in the cytoplasm. It carries out the reaction urea + 2 H2O + H(+) = hydrogencarbonate + 2 NH4(+). It participates in nitrogen metabolism; urea degradation; CO(2) and NH(3) from urea (urease route): step 1/1. The chain is Urease subunit alpha from Actinobacillus pleuropneumoniae serotype 5b (strain L20).